The sequence spans 569 residues: Proline--tRNA ligase (569 aa).

The protein belongs to the class-II aminoacyl-tRNA synthetase family. ProS type 1 subfamily. Homodimer.

Its subcellular location is the cytoplasm. It catalyses the reaction tRNA(Pro) + L-proline + ATP = L-prolyl-tRNA(Pro) + AMP + diphosphate. Catalyzes the attachment of proline to tRNA(Pro) in a two-step reaction: proline is first activated by ATP to form Pro-AMP and then transferred to the acceptor end of tRNA(Pro). As ProRS can inadvertently accommodate and process non-cognate amino acids such as alanine and cysteine, to avoid such errors it has two additional distinct editing activities against alanine. One activity is designated as 'pretransfer' editing and involves the tRNA(Pro)-independent hydrolysis of activated Ala-AMP. The other activity is designated 'posttransfer' editing and involves deacylation of mischarged Ala-tRNA(Pro). The misacylated Cys-tRNA(Pro) is not edited by ProRS. In Shewanella loihica (strain ATCC BAA-1088 / PV-4), this protein is Proline--tRNA ligase.